Reading from the N-terminus, the 203-residue chain is Peptidoglycan-recognition protein SA (203 aa).

Residues 1–26 (MQPVRFGSPWIMAIGLVLLLLAFVSA) form the signal peptide. 2 disulfide bridges follow: Cys-37–Cys-160 and Cys-74–Cys-80. An N-acetylmuramoyl-L-alanine amidase domain is found at 59-186 (RPIRYVVIHH…SQVISTQSPG (128 aa)). 2 peptidoglycan binding regions span residues 87 to 90 (MQAY) and 97 to 102 (FNDISY).

Belongs to the N-acetylmuramoyl-L-alanine amidase 2 family. As to expression, in larvae, it is expressed in fat body. Also expressed in uninduced hemocytes and mbn-2 cells.

Its subcellular location is the secreted. It catalyses the reaction N-acetyl-D-glucosaminyl-N-acetylmuramoyl-L-alanyl-meso-2,6-diaminoheptanedioyl-D-alanine + H2O = N-acetyl-D-glucosaminyl-N-acetylmuramoyl-L-alanyl-meso-2,6-diaminoheptanedioate + D-alanine. In terms of biological role, peptidoglycan-recognition protein that plays a key role in innate immunity by binding to peptidoglycans (PGN) of Gram-positive bacteria and activating the Toll pathway upstream of spz activating enzyme SPE. Has no activity against Gram-negative bacteria and fungi. Shows some partial redundancy with PRPGP-SD in Gram-positive bacteria recognition. May act by forming a complex with GNBP1 that activates the proteolytic cleavage of Spatzle and the subsequent activation of Toll pathway. Binds to diaminopimelic acid-type tetrapeptide PGN (DAP-type PGN) and lysine-type PGN (Lys-type PGN). Has some L,D-carboxypeptidase activity for DAP-type PGN, which are specific to prokaryotes, but not for Lys-type PGN. This Drosophila melanogaster (Fruit fly) protein is Peptidoglycan-recognition protein SA (PGRP-SA).